We begin with the raw amino-acid sequence, 455 residues long: tRNA-2-methylthio-N(6)-dimethylallyladenosine synthase (455 aa).

The MTTase N-terminal domain maps to 18-133 (KKLFIETYGC…LPELIAAVEA (116 aa)). [4Fe-4S] cluster contacts are provided by Cys27, Cys63, Cys97, Cys171, Cys175, and Cys178. A Radical SAM core domain is found at 157–390 (CGNHISGFVS…IALQNRLSAE (234 aa)). The TRAM domain maps to 393-455 (QRCIGKTYEV…SSATLKGEEV (63 aa)).

It belongs to the methylthiotransferase family. MiaB subfamily. As to quaternary structure, monomer. It depends on [4Fe-4S] cluster as a cofactor.

The protein localises to the cytoplasm. The enzyme catalyses N(6)-dimethylallyladenosine(37) in tRNA + (sulfur carrier)-SH + AH2 + 2 S-adenosyl-L-methionine = 2-methylsulfanyl-N(6)-dimethylallyladenosine(37) in tRNA + (sulfur carrier)-H + 5'-deoxyadenosine + L-methionine + A + S-adenosyl-L-homocysteine + 2 H(+). Catalyzes the methylthiolation of N6-(dimethylallyl)adenosine (i(6)A), leading to the formation of 2-methylthio-N6-(dimethylallyl)adenosine (ms(2)i(6)A) at position 37 in tRNAs that read codons beginning with uridine. The chain is tRNA-2-methylthio-N(6)-dimethylallyladenosine synthase from Bacteroides thetaiotaomicron (strain ATCC 29148 / DSM 2079 / JCM 5827 / CCUG 10774 / NCTC 10582 / VPI-5482 / E50).